Here is a 389-residue protein sequence, read N- to C-terminus: 8-amino-7-oxononanoate synthase (389 aa).

Substrate is bound at residue R19. Pyridoxal 5'-phosphate is bound at residue 106-107 (GY). H131 is a substrate binding site. Residues S178, 203–206 (DDAH), and 234–237 (TLSK) contribute to the pyridoxal 5'-phosphate site. An N6-(pyridoxal phosphate)lysine modification is found at K237. Residue T351 participates in substrate binding.

This sequence belongs to the class-II pyridoxal-phosphate-dependent aminotransferase family. BioF subfamily. As to quaternary structure, homodimer. Pyridoxal 5'-phosphate is required as a cofactor.

It carries out the reaction 6-carboxyhexanoyl-[ACP] + L-alanine + H(+) = (8S)-8-amino-7-oxononanoate + holo-[ACP] + CO2. It functions in the pathway cofactor biosynthesis; biotin biosynthesis. In terms of biological role, catalyzes the decarboxylative condensation of pimeloyl-[acyl-carrier protein] and L-alanine to produce 8-amino-7-oxononanoate (AON), [acyl-carrier protein], and carbon dioxide. Can also use pimeloyl-CoA instead of pimeloyl-ACP as substrate. This is 8-amino-7-oxononanoate synthase (bioF) from Lysinibacillus sphaericus (Bacillus sphaericus).